The primary structure comprises 159 residues: Ribosomal RNA large subunit methyltransferase H (159 aa).

Residues Leu-76, Gly-108, and 127–132 contribute to the S-adenosyl-L-methionine site; that span reads FGLLTL.

This sequence belongs to the RNA methyltransferase RlmH family. In terms of assembly, homodimer.

It localises to the cytoplasm. It carries out the reaction pseudouridine(1915) in 23S rRNA + S-adenosyl-L-methionine = N(3)-methylpseudouridine(1915) in 23S rRNA + S-adenosyl-L-homocysteine + H(+). Specifically methylates the pseudouridine at position 1915 (m3Psi1915) in 23S rRNA. The chain is Ribosomal RNA large subunit methyltransferase H from Streptococcus pyogenes serotype M6 (strain ATCC BAA-946 / MGAS10394).